The primary structure comprises 86 residues: Small ribosomal subunit protein bS20 (86 aa).

The segment covering 1–11 (MANIKQQKKRN) has biased composition (basic residues). The tract at residues 1-20 (MANIKQQKKRNKTNEKRRLQ) is disordered.

This sequence belongs to the bacterial ribosomal protein bS20 family.

In terms of biological role, binds directly to 16S ribosomal RNA. This is Small ribosomal subunit protein bS20 from Aster yellows witches'-broom phytoplasma (strain AYWB).